A 158-amino-acid chain; its full sequence is NAD(P)H-quinone oxidoreductase subunit J, chloroplastic (158 aa).

Belongs to the complex I 30 kDa subunit family. In terms of assembly, NDH is composed of at least 16 different subunits, 5 of which are encoded in the nucleus.

The protein localises to the plastid. The protein resides in the chloroplast thylakoid membrane. The enzyme catalyses a plastoquinone + NADH + (n+1) H(+)(in) = a plastoquinol + NAD(+) + n H(+)(out). It carries out the reaction a plastoquinone + NADPH + (n+1) H(+)(in) = a plastoquinol + NADP(+) + n H(+)(out). In terms of biological role, NDH shuttles electrons from NAD(P)H:plastoquinone, via FMN and iron-sulfur (Fe-S) centers, to quinones in the photosynthetic chain and possibly in a chloroplast respiratory chain. The immediate electron acceptor for the enzyme in this species is believed to be plastoquinone. Couples the redox reaction to proton translocation, and thus conserves the redox energy in a proton gradient. The sequence is that of NAD(P)H-quinone oxidoreductase subunit J, chloroplastic from Jasminum nudiflorum (Winter jasmine).